We begin with the raw amino-acid sequence, 247 residues long: Mast cell protease 2 (247 aa).

The first 18 residues, 1-18 (MQALLFLMALLLPSGAGA), serve as a signal peptide directing secretion. The propeptide at 19-20 (EE) is activation peptide. The Peptidase S1 domain maps to 21-244 (IIGGVESIPH…YVPWINAVIN (224 aa)). Residues Cys-50 and Cys-66 are joined by a disulfide bond. Active-site charge relay system residues include His-65 and Asp-109. 2 disulfides stabilise this stretch: Cys-143-Cys-208 and Cys-174-Cys-187. Ser-202 acts as the Charge relay system in catalysis.

Belongs to the peptidase S1 family. Granzyme subfamily.

Its function is as follows. This enzyme, isolated from small intestine, specifically inactivates the apo forms of a certain group of intracellular pyridoxal phosphate-requiring enzymes. It has chymotrypsin-like specificity towards small substrates. The polypeptide is Mast cell protease 2 (Mcpt2) (Rattus norvegicus (Rat)).